The chain runs to 103 residues: Small ribosomal subunit protein uS10 (103 aa).

It belongs to the universal ribosomal protein uS10 family. Part of the 30S ribosomal subunit.

Functionally, involved in the binding of tRNA to the ribosomes. The chain is Small ribosomal subunit protein uS10 from Aromatoleum aromaticum (strain DSM 19018 / LMG 30748 / EbN1) (Azoarcus sp. (strain EbN1)).